The primary structure comprises 497 residues: Taxane 10-beta-hydroxylase (497 aa).

Residue C443 participates in heme binding.

Belongs to the cytochrome P450 family. The cofactor is heme.

The catalysed reaction is taxa-4(20),11-dien-5alpha-yl acetate + reduced [NADPH--hemoprotein reductase] + O2 = 10beta-hydroxytaxa-4(20),11-dien-5alpha-yl acetate + oxidized [NADPH--hemoprotein reductase] + H2O + H(+). It functions in the pathway alkaloid biosynthesis; taxol biosynthesis; 10-deacetyl-2-debenzoylbaccatin III from taxa-4(20),11-dien-5alpha-ol: step 2/3. In terms of biological role, involved in the transformation of a taxadienyl acetate by hydroxylation at C10 to yield taxadien-5-alpha-acetoxy-10-beta-ol. This Taxus cuspidata (Japanese yew) protein is Taxane 10-beta-hydroxylase (CYP725A1).